Reading from the N-terminus, the 445-residue chain is Phosphoglucosamine mutase (445 aa).

The active-site Phosphoserine intermediate is the serine 102. 4 residues coordinate Mg(2+): serine 102, aspartate 241, aspartate 243, and aspartate 245. Serine 102 carries the phosphoserine modification.

Belongs to the phosphohexose mutase family. Mg(2+) is required as a cofactor. In terms of processing, activated by phosphorylation.

It catalyses the reaction alpha-D-glucosamine 1-phosphate = D-glucosamine 6-phosphate. Catalyzes the conversion of glucosamine-6-phosphate to glucosamine-1-phosphate. This chain is Phosphoglucosamine mutase, found in Proteus mirabilis (strain HI4320).